We begin with the raw amino-acid sequence, 361 residues long: Alanine racemase (361 aa).

K35 (proton acceptor; specific for D-alanine) is an active-site residue. K35 carries the post-translational modification N6-(pyridoxal phosphate)lysine. Position 130 (R130) interacts with substrate. The active-site Proton acceptor; specific for L-alanine is the Y257. Residue M305 coordinates substrate.

This sequence belongs to the alanine racemase family. Pyridoxal 5'-phosphate serves as cofactor.

It catalyses the reaction L-alanine = D-alanine. It functions in the pathway amino-acid biosynthesis; D-alanine biosynthesis; D-alanine from L-alanine: step 1/1. Functionally, catalyzes the interconversion of L-alanine and D-alanine. May also act on other amino acids. The sequence is that of Alanine racemase (alr) from Nitrosomonas eutropha (strain DSM 101675 / C91 / Nm57).